The following is a 1054-amino-acid chain: Kinesin-like protein KIN-7G (1054 aa).

The 325-residue stretch at 17–341 (KIFVSVRLRP…LLFASCAKEV (325 aa)) folds into the Kinesin motor domain. 105-112 (GQTSSGKT) is a binding site for ATP. Coiled-coil stretches lie at residues 350-425 (VMSD…IGEA) and 611-640 (TETAEEKEEKEETEEKEEEEEERVKEVSSV). Disordered stretches follow at residues 600–648 (CEPE…KEKS) and 740–760 (ERAESNLKPSNSKRPPLPKHI). Residues 613–631 (TAEEKEEKEETEEKEEEEE) show a composition bias toward acidic residues.

It belongs to the TRAFAC class myosin-kinesin ATPase superfamily. Kinesin family. KIN-7 subfamily.

This Arabidopsis thaliana (Mouse-ear cress) protein is Kinesin-like protein KIN-7G.